The chain runs to 345 residues: Ribonucleoside-diphosphate reductase small chain 2 (345 aa).

N-acetylmethionine is present on methionine 1. Tyrosine 131 is a catalytic residue. Serine 169 and serine 332 each carry phosphoserine. At threonine 334 the chain carries Phosphothreonine. Residue serine 336 is modified to Phosphoserine. Residue lysine 337 forms a Glycyl lysine isopeptide (Lys-Gly) (interchain with G-Cter in ubiquitin) linkage.

The protein belongs to the ribonucleoside diphosphate reductase small chain family. As to quaternary structure, heterotetramer of two large (R1) and two small (R2) subunits. S.cerevisiae has two different R1 subunits (RNR1 and RNR3) and two different R2 subunits (RNR2 and RNR4). The functional form of the small subunits is a RNR2-RNR4 heterodimer, where RNR2 provides the iron-radical center and RNR4 is required for proper folding of RNR2 and assembly with the large subunits. Under normal growth conditions, the active form of the large subunits is a homodimer of the constitutively expressed RNR1. In damaged cells or cells arrested for DNA synthesis, the reductase consists of multiple species because of the association of the small subunits (RNR2-RNR4) with either the RNR1 homodimer or a heterodimer of RNR1 and the damage-inducible RNR3. Interacts with DIF1.

The protein resides in the nucleus. It carries out the reaction a 2'-deoxyribonucleoside 5'-diphosphate + [thioredoxin]-disulfide + H2O = a ribonucleoside 5'-diphosphate + [thioredoxin]-dithiol. Provides the precursors necessary for DNA synthesis. Catalyzes the biosynthesis of deoxyribonucleotides from the corresponding ribonucleotides. RNR4 is required for proper folding of RNR2 and assembly with the large subunits. The polypeptide is Ribonucleoside-diphosphate reductase small chain 2 (RNR4) (Saccharomyces cerevisiae (strain ATCC 204508 / S288c) (Baker's yeast)).